The chain runs to 138 residues: Basic phospholipase A2 Cll-N6 (138 aa).

The first 16 residues, 1–16, serve as a signal peptide directing secretion; that stretch reads MRTFWIVAVLLVGVEG. Cystine bridges form between C42-C131, C44-C60, C59-C111, C65-C138, C66-C104, C73-C97, and C91-C102. Residues Y43, G45, and G47 each coordinate Ca(2+). The active site involves H63. Residue D64 participates in Ca(2+) binding. Residue D105 is part of the active site.

As to quaternary structure, monomer. Ca(2+) is required as a cofactor. In terms of tissue distribution, expressed by the venom gland.

It localises to the secreted. It carries out the reaction a 1,2-diacyl-sn-glycero-3-phosphocholine + H2O = a 1-acyl-sn-glycero-3-phosphocholine + a fatty acid + H(+). Its function is as follows. Snake venom phospholipase A2 (PLA2) that shows myotoxic activities. PLA2 catalyzes the calcium-dependent hydrolysis of the 2-acyl groups in 3-sn-phosphoglycerides. The polypeptide is Basic phospholipase A2 Cll-N6 (Crotalus lepidus lepidus (Mottled rock rattlesnake)).